The primary structure comprises 37 residues: Large ribosomal subunit protein bL36c (37 aa).

The protein belongs to the bacterial ribosomal protein bL36 family.

It localises to the plastid. Its subcellular location is the chloroplast. The protein is Large ribosomal subunit protein bL36c of Coffea arabica (Arabian coffee).